A 415-amino-acid polypeptide reads, in one-letter code: Cysteate synthase (415 aa).

Residue K104 is modified to N6-(pyridoxal phosphate)lysine. Pyridoxal 5'-phosphate is bound by residues N131 and T376.

This sequence belongs to the threonine synthase family. Cysteate synthase subfamily. In terms of assembly, homotrimer. Pyridoxal 5'-phosphate serves as cofactor.

It catalyses the reaction O-phospho-L-serine + sulfite + H(+) = L-cysteate + phosphate. It functions in the pathway cofactor biosynthesis; coenzyme M biosynthesis. Specifically catalyzes the beta-elimination of phosphate from L-phosphoserine and the beta-addition of sulfite to the dehydroalanine intermediate to produce L-cysteate. This chain is Cysteate synthase, found in Methanothrix thermoacetophila (strain DSM 6194 / JCM 14653 / NBRC 101360 / PT) (Methanosaeta thermophila).